The primary structure comprises 721 residues: Putative cullin-like protein 1 (721 aa).

Residues 651-713 (DRRYAIDAAL…RDYLERDTEN (63 aa)) form the Cullin neddylation domain.

The protein belongs to the cullin family.

The protein is Putative cullin-like protein 1 of Arabidopsis thaliana (Mouse-ear cress).